The chain runs to 217 residues: Probable GTP-binding protein EngB (217 aa).

In terms of domain architecture, EngB-type G spans 29-213 (GPLEVAFAGR…RQAIGETVGV (185 aa)). GTP contacts are provided by residues 37 to 44 (GRSNVGKS), 64 to 68 (GRTQE), 91 to 94 (DMPG), 158 to 161 (TKTD), and 192 to 194 (TSS). Mg(2+) is bound by residues Ser44 and Thr66.

Belongs to the TRAFAC class TrmE-Era-EngA-EngB-Septin-like GTPase superfamily. EngB GTPase family. It depends on Mg(2+) as a cofactor.

Functionally, necessary for normal cell division and for the maintenance of normal septation. The sequence is that of Probable GTP-binding protein EngB from Rhizobium leguminosarum bv. trifolii (strain WSM2304).